Here is a 129-residue protein sequence, read N- to C-terminus: UPF0102 protein amb4503 (129 aa).

The protein belongs to the UPF0102 family.

The protein is UPF0102 protein amb4503 of Paramagnetospirillum magneticum (strain ATCC 700264 / AMB-1) (Magnetospirillum magneticum).